We begin with the raw amino-acid sequence, 461 residues long: ATP synthase subunit beta 2 (461 aa).

151–158 (GGAGVGKT) contacts ATP.

Belongs to the ATPase alpha/beta chains family. As to quaternary structure, F-type ATPases have 2 components, CF(1) - the catalytic core - and CF(0) - the membrane proton channel. CF(1) has five subunits: alpha(3), beta(3), gamma(1), delta(1), epsilon(1). CF(0) has three main subunits: a(1), b(2) and c(9-12). The alpha and beta chains form an alternating ring which encloses part of the gamma chain. CF(1) is attached to CF(0) by a central stalk formed by the gamma and epsilon chains, while a peripheral stalk is formed by the delta and b chains.

The protein resides in the cell inner membrane. It carries out the reaction ATP + H2O + 4 H(+)(in) = ADP + phosphate + 5 H(+)(out). Functionally, produces ATP from ADP in the presence of a proton gradient across the membrane. The catalytic sites are hosted primarily by the beta subunits. The protein is ATP synthase subunit beta 2 of Vibrio campbellii (strain ATCC BAA-1116).